The sequence spans 377 residues: 5-hydroxytryptamine receptor 1D (377 aa).

The tract at residues 1–23 is disordered; sequence MSPLNQSAEGLPQEASNRSLNAT. Residues 1–38 are Extracellular-facing; sequence MSPLNQSAEGLPQEASNRSLNATETSEAWDPRTLQALK. 3 N-linked (GlcNAc...) asparagine glycosylation sites follow: Asn5, Asn17, and Asn21. The chain crosses the membrane as a helical span at residues 39 to 64; it reads ISLAVVLSVITLATVLSNAFVLTTIL. At 65–75 the chain is on the cytoplasmic side; the sequence is LTRKLHTPANY. A helical membrane pass occupies residues 76 to 97; it reads LIGSLATTDLLVSILVMPISIA. Residues 98-109 lie on the Extracellular side of the membrane; that stretch reads YTITHTWNFGQI. Residues 110–134 form a helical membrane-spanning segment; it reads LCDIWLSSDITCCTASILHLCVIAL. An intrachain disulfide couples Cys111 to Cys188. Serotonin-binding residues include Asp118 and Cys122. The short motif at 135–137 is the DRY motif; important for ligand-induced conformation changes element; sequence DRY. Over 135–154 the chain is Cytoplasmic; the sequence is DRYWAITDALEYSKRRTAGH. The helical transmembrane segment at 155–176 threads the bilayer; the sequence is AATMIAIVWAISICISIPPLFW. Residues 177 to 194 are Extracellular-facing; sequence RQAKAQEEMSDCLVNTSQ. Residues 195 to 218 form a helical membrane-spanning segment; it reads ISYTIYSTCGAFYIPSVLLIILYG. The Cytoplasmic portion of the chain corresponds to 219 to 300; it reads RIYRAARNRI…ISAARERKAT (82 aa). A helical transmembrane segment spans residues 301–326; it reads KILGIILGAFIICWLPFFVVSLVLPI. Ser321 lines the serotonin pocket. At 327 to 335 the chain is on the extracellular side; it reads CRDSCWIHP. The helical transmembrane segment at 336–359 threads the bilayer; sequence ALFDFFTWLGYLNSLINPIIYTVF. The NPxxY motif; important for ligand-induced conformation changes and signaling signature appears at 352-356; sequence NPIIY. The Cytoplasmic portion of the chain corresponds to 360-377; that stretch reads NEEFRQAFQKIVPFRKAS.

This sequence belongs to the G-protein coupled receptor 1 family. In terms of assembly, homodimer. Heterodimer with HTR1B. Detected in brain neocortex and caudate nucleus (at protein level).

Its subcellular location is the cell membrane. Functionally, G-protein coupled receptor for 5-hydroxytryptamine (serotonin). Also functions as a receptor for ergot alkaloid derivatives, various anxiolytic and antidepressant drugs and other psychoactive substances. Ligand binding causes a conformation change that triggers signaling via guanine nucleotide-binding proteins (G proteins) and modulates the activity of downstream effectors, such as adenylate cyclase. HTR1D is coupled to G(i)/G(o) G alpha proteins and mediates inhibitory neurotransmission by inhibiting adenylate cyclase activity. Regulates the release of 5-hydroxytryptamine in the brain, and thereby affects neural activity. May also play a role in regulating the release of other neurotransmitters. May play a role in vasoconstriction. In Homo sapiens (Human), this protein is 5-hydroxytryptamine receptor 1D.